Reading from the N-terminus, the 607-residue chain is UvrABC system protein C (607 aa).

Positions Ser-15–Ile-92 constitute a GIY-YIG domain. In terms of domain architecture, UVR spans Gly-197–Thr-232.

Belongs to the UvrC family. Interacts with UvrB in an incision complex.

The protein resides in the cytoplasm. In terms of biological role, the UvrABC repair system catalyzes the recognition and processing of DNA lesions. UvrC both incises the 5' and 3' sides of the lesion. The N-terminal half is responsible for the 3' incision and the C-terminal half is responsible for the 5' incision. This is UvrABC system protein C from Oenococcus oeni (strain ATCC BAA-331 / PSU-1).